A 164-amino-acid chain; its full sequence is UPF0478 protein SSP1024 (164 aa).

A helical membrane pass occupies residues 7–27 (IAGIIAAVAFLILVIGIVVVL). The interval 136 to 164 (RNRRDSANYKTSSVANETNHSYTTRVDNK) is disordered. Positions 143–164 (NYKTSSVANETNHSYTTRVDNK) are enriched in polar residues.

Belongs to the UPF0478 family.

It is found in the cell membrane. The sequence is that of UPF0478 protein SSP1024 from Staphylococcus saprophyticus subsp. saprophyticus (strain ATCC 15305 / DSM 20229 / NCIMB 8711 / NCTC 7292 / S-41).